The primary structure comprises 518 residues: MSISHSDTVLIIDFGSQVTQLIARRVRAMGVYCEVVPFQLALEGMQRIKPKAVILSGSPYSVIDEGSPRAPMEIFEMDIPVLGICYGQQIMCVQLGGKVASGHEREFGRAFLEVQENSALFEGVWEKGSCYQVWMSHGDRVTALPEGFRVIGTSKGAPYAAIADEKRRLYAVQFHPEVVHTLDGTKLLQNFVLKISNLKGNWSMASYREQTIAKIRQKVGKSRVICGLSGGVDSSVVAVLLHEAIGDQLTCILVDHGLMRKNEAQEVLTLFRDHYNIKLIHVNAANMFLNALEGEIDPEKKRKTIGRLFIEVFEEETKKIGGAEFLAQGTLYPDVIESISAIGKSVTIKSHHNVGGLPERMNMKLVEPLRELFKDEVRSLGKELGLPEQFIGRHPFPGPGLAIRCPGAVTREKLEILREADAIYLDEIRKAGLYDEIWQAFAILLPVQTVGVMGDGRTYEFVCALRAVTSVDGMSADFYPYDMEFLSKTAARIINEVRGINRVVYDVTSKPPGTIEWE.

The Glutamine amidotransferase type-1 domain occupies 8 to 201 (TVLIIDFGSQ…VLKISNLKGN (194 aa)). Cys85 functions as the Nucleophile in the catalytic mechanism. Residues His175 and Glu177 contribute to the active site. Positions 202 to 393 (WSMASYREQT…LGLPEQFIGR (192 aa)) constitute a GMPS ATP-PPase domain. 229 to 235 (SGGVDSS) contacts ATP.

In terms of assembly, homodimer.

It catalyses the reaction XMP + L-glutamine + ATP + H2O = GMP + L-glutamate + AMP + diphosphate + 2 H(+). It participates in purine metabolism; GMP biosynthesis; GMP from XMP (L-Gln route): step 1/1. Catalyzes the synthesis of GMP from XMP. The protein is GMP synthase [glutamine-hydrolyzing] of Bartonella henselae (strain ATCC 49882 / DSM 28221 / CCUG 30454 / Houston 1) (Rochalimaea henselae).